A 204-amino-acid chain; its full sequence is Ubiquitin-conjugating enzyme E2 S (204 aa).

The UBC core domain maps to 14–160 (QIIKQVAREI…AKMFTEIHAK (147 aa)). Cysteine 98 functions as the Glycyl thioester intermediate in the catalytic mechanism. Positions 165-176 (SSNNISEGQQES) are enriched in polar residues. Residues 165–204 (SSNNISEGQQESLPGKKRVAVNEKMCDKKKKDKKRALKRL) are disordered. The segment covering 191–204 (DKKKKDKKRALKRL) has biased composition (basic residues).

Belongs to the ubiquitin-conjugating enzyme family.

The catalysed reaction is S-ubiquitinyl-[E1 ubiquitin-activating enzyme]-L-cysteine + [E2 ubiquitin-conjugating enzyme]-L-cysteine = [E1 ubiquitin-activating enzyme]-L-cysteine + S-ubiquitinyl-[E2 ubiquitin-conjugating enzyme]-L-cysteine.. The protein operates within protein modification; protein ubiquitination. Functionally, catalyzes the covalent attachment of ubiquitin to other proteins. Acts as an essential factor of the anaphase promoting complex/cyclosome (APC/C), a cell cycle-regulated ubiquitin ligase that controls progression through mitosis. Acts by specifically elongating polyubiquitin chains initiated by the E2 enzyme UBCH10 on APC/C substrates, enhancing the degradation of APC/C substrates by the proteasome and promoting mitotic exit. The chain is Ubiquitin-conjugating enzyme E2 S from Nematostella vectensis (Starlet sea anemone).